The chain runs to 831 residues: Molybdenum cofactor sulfurase (831 aa).

The residue at position 262 (Lys-262) is an N6-(pyridoxal phosphate)lysine. Cys-422 is an active-site residue. Positions 651-823 constitute an MOSC domain; it reads AWLSEFLGKP…LSIGSHVIPK (173 aa).

The protein belongs to the class-V pyridoxal-phosphate-dependent aminotransferase family. MOCOS subfamily. Requires pyridoxal 5'-phosphate as cofactor.

It carries out the reaction Mo-molybdopterin + L-cysteine + AH2 = thio-Mo-molybdopterin + L-alanine + A + H2O. The protein operates within cofactor biosynthesis; molybdopterin biosynthesis. Its function is as follows. Sulfurates the molybdenum cofactor. Sulfation of molybdenum is essential for xanthine dehydrogenase (XDH) and aldehyde oxidase (ADO) enzymes in which molybdenum cofactor is liganded by 1 oxygen and 1 sulfur atom in active form. The chain is Molybdenum cofactor sulfurase (mocos) from Danio rerio (Zebrafish).